Consider the following 119-residue polypeptide: Immunoglobulin heavy variable 3-72 (119 aa).

The N-terminal stretch at 1 to 19 (MEFGLSWVFLVVILQGVQC) is a signal peptide. Residues 20–44 (EVQLVESGGGLVQPGGSLRLSCAAS) are framework-1. The 100-residue stretch at 20–119 (EVQLVESGGG…EDTAVYYCAR (100 aa)) folds into the Ig-like domain. A disulfide bridge links Cys-41 with Cys-117. A complementarity-determining-1 region spans residues 45–52 (GFTFSDHY). A framework-2 region spans residues 53–69 (MDWVRQAPGKGLEWVGR). The interval 70–79 (TRNKANSYTT) is complementarity-determining-2. The interval 80–117 (EYAASVKGRFTISRDDSKNSLYLQMNSLKTEDTAVYYC) is framework-3. The interval 118 to 119 (AR) is complementarity-determining-3.

As to quaternary structure, immunoglobulins are composed of two identical heavy chains and two identical light chains; disulfide-linked.

It localises to the secreted. The protein resides in the cell membrane. Functionally, v region of the variable domain of immunoglobulin heavy chains that participates in the antigen recognition. Immunoglobulins, also known as antibodies, are membrane-bound or secreted glycoproteins produced by B lymphocytes. In the recognition phase of humoral immunity, the membrane-bound immunoglobulins serve as receptors which, upon binding of a specific antigen, trigger the clonal expansion and differentiation of B lymphocytes into immunoglobulins-secreting plasma cells. Secreted immunoglobulins mediate the effector phase of humoral immunity, which results in the elimination of bound antigens. The antigen binding site is formed by the variable domain of one heavy chain, together with that of its associated light chain. Thus, each immunoglobulin has two antigen binding sites with remarkable affinity for a particular antigen. The variable domains are assembled by a process called V-(D)-J rearrangement and can then be subjected to somatic hypermutations which, after exposure to antigen and selection, allow affinity maturation for a particular antigen. This Homo sapiens (Human) protein is Immunoglobulin heavy variable 3-72.